The following is a 190-amino-acid chain: Cytoplasmic envelopment protein 3 (190 aa).

Residue Gly-2 is the site of N-myristoyl glycine; by host attachment. Residues Arg-27 to Phe-190 form a disordered region. Residues Ser-30 to Ser-43 are compositionally biased toward polar residues. Residues Asp-44–Glu-58 show a composition bias toward acidic residues. Residues Ser-80 to Lys-90 show a composition bias toward basic and acidic residues. The span at Lys-108–Gln-123 shows a compositional bias: basic residues. The segment covering Glu-130 to Thr-139 has biased composition (acidic residues).

Belongs to the herpesviridae cytoplasmic envelopment protein 3 family. As to quaternary structure, interacts with cytoplasmic envelopment protein 2; this interaction is essential for the proper localization of each protein to the assembly complex and thus for the production of infectious virus. Post-translationally, myristoylation and palmitoylation (probably on one or more of the nearby cysteines at the N-terminus) enable membrane-binding and Golgi apparatus-specific targeting and are essential for efficient packaging. Phosphorylated. Phosphorylation does not seem to be required for recycling to the host Golgi apparatus. Packaging is selective for underphosphorylated forms.

It localises to the virion tegument. Its subcellular location is the virion membrane. It is found in the host cell membrane. The protein resides in the host Golgi apparatus membrane. In terms of biological role, plays an important role in the cytoplasmic envelopment of tegument proteins and capsids during the assembly and egress processes. Also participates in viral entry at the fusion step probably by regulating the core fusion machinery. The polypeptide is Cytoplasmic envelopment protein 3 (UL99) (Human cytomegalovirus (strain AD169) (HHV-5)).